The following is a 331-amino-acid chain: Glyceraldehyde-3-phosphate dehydrogenase (331 aa).

NAD(+)-binding positions include 12–13 (RI), D34, R78, and T120. D-glyceraldehyde 3-phosphate contacts are provided by residues 149–151 (SCT), T180, 209–210 (TG), and R232. The Nucleophile role is filled by C150. N314 lines the NAD(+) pocket.

The protein belongs to the glyceraldehyde-3-phosphate dehydrogenase family. In terms of assembly, homotetramer.

The protein localises to the cytoplasm. The catalysed reaction is D-glyceraldehyde 3-phosphate + phosphate + NAD(+) = (2R)-3-phospho-glyceroyl phosphate + NADH + H(+). Its pathway is carbohydrate degradation; glycolysis; pyruvate from D-glyceraldehyde 3-phosphate: step 1/5. Catalyzes the oxidative phosphorylation of glyceraldehyde 3-phosphate (G3P) to 1,3-bisphosphoglycerate (BPG) using the cofactor NAD. The first reaction step involves the formation of a hemiacetal intermediate between G3P and a cysteine residue, and this hemiacetal intermediate is then oxidized to a thioester, with concomitant reduction of NAD to NADH. The reduced NADH is then exchanged with the second NAD, and the thioester is attacked by a nucleophilic inorganic phosphate to produce BPG. The chain is Glyceraldehyde-3-phosphate dehydrogenase (gapA) from Escherichia fergusonii (strain ATCC 35469 / DSM 13698 / CCUG 18766 / IAM 14443 / JCM 21226 / LMG 7866 / NBRC 102419 / NCTC 12128 / CDC 0568-73).